Consider the following 274-residue polypeptide: Bis(5'-nucleosyl)-tetraphosphatase, symmetrical (274 aa).

The protein belongs to the Ap4A hydrolase family.

The enzyme catalyses P(1),P(4)-bis(5'-adenosyl) tetraphosphate + H2O = 2 ADP + 2 H(+). Hydrolyzes diadenosine 5',5'''-P1,P4-tetraphosphate to yield ADP. In Shewanella oneidensis (strain ATCC 700550 / JCM 31522 / CIP 106686 / LMG 19005 / NCIMB 14063 / MR-1), this protein is Bis(5'-nucleosyl)-tetraphosphatase, symmetrical.